Here is a 471-residue protein sequence, read N- to C-terminus: Eukaryotic translation initiation factor 3 subunit L (471 aa).

Residues 252–446 (DAIRMFSHIL…DLDYAMQGDL (195 aa)) enclose the PCI domain.

The protein belongs to the eIF-3 subunit L family.

It is found in the cytoplasm. In terms of biological role, component of the eukaryotic translation initiation factor 3 (eIF-3) complex, which is involved in protein synthesis of a specialized repertoire of mRNAs and, together with other initiation factors, stimulates binding of mRNA and methionyl-tRNAi to the 40S ribosome. The eIF-3 complex specifically targets and initiates translation of a subset of mRNAs involved in cell proliferation. This is Eukaryotic translation initiation factor 3 subunit L from Pyricularia oryzae (strain Y34) (Rice blast fungus).